The primary structure comprises 545 residues: Chaperonin GroEL 1 (545 aa).

Residues 29 to 32 (TLGP), 86 to 90 (DGTTT), G413, 477 to 479 (NAA), and D493 each bind ATP.

Belongs to the chaperonin (HSP60) family. In terms of assembly, forms a cylinder of 14 subunits composed of two heptameric rings stacked back-to-back. Interacts with the co-chaperonin GroES.

The protein resides in the cytoplasm. The enzyme catalyses ATP + H2O + a folded polypeptide = ADP + phosphate + an unfolded polypeptide.. Functionally, together with its co-chaperonin GroES, plays an essential role in assisting protein folding. The GroEL-GroES system forms a nano-cage that allows encapsulation of the non-native substrate proteins and provides a physical environment optimized to promote and accelerate protein folding. This is Chaperonin GroEL 1 from Arthrobacter sp. (strain FB24).